The primary structure comprises 290 residues: 4-hydroxybenzoate octaprenyltransferase (290 aa).

A run of 8 helical transmembrane segments spans residues 21–41, 44–64, 97–117, 143–163, 168–188, 211–231, 235–255, and 270–290; these read IGTMLLLWPCLMALLLAADGM, LRVLIIFIIGVVVMRACGCII, LFVVLGLFAFSLVLLLNPLVV, FLGVVWSWSIPMAYAAQTGEV, WWLFAANWCWTVAYDTMYAMV, EIIGAFQLAALGCFIAAGWSG, LLYGLGVLTFVGFSAYQQRLI, and NNWAGLSLFLALGADYAFAAL.

This sequence belongs to the UbiA prenyltransferase family. Mg(2+) is required as a cofactor.

It localises to the cell inner membrane. The catalysed reaction is all-trans-octaprenyl diphosphate + 4-hydroxybenzoate = 4-hydroxy-3-(all-trans-octaprenyl)benzoate + diphosphate. It participates in cofactor biosynthesis; ubiquinone biosynthesis. Catalyzes the prenylation of para-hydroxybenzoate (PHB) with an all-trans polyprenyl group. Mediates the second step in the final reaction sequence of ubiquinone-8 (UQ-8) biosynthesis, which is the condensation of the polyisoprenoid side chain with PHB, generating the first membrane-bound Q intermediate 3-octaprenyl-4-hydroxybenzoate. This Shewanella amazonensis (strain ATCC BAA-1098 / SB2B) protein is 4-hydroxybenzoate octaprenyltransferase.